Reading from the N-terminus, the 220-residue chain is Iron-sulfur cluster repair protein YtfE (220 aa).

The protein belongs to the RIC family. YtfE subfamily. As to quaternary structure, homodimer.

It localises to the cytoplasm. Its function is as follows. Di-iron-containing protein involved in the repair of iron-sulfur clusters damaged by oxidative and nitrosative stress conditions. This is Iron-sulfur cluster repair protein YtfE from Salmonella schwarzengrund (strain CVM19633).